Reading from the N-terminus, the 116-residue chain is Ig heavy chain V region 1B43 (116 aa).

Residues 1–18 (MRVLILLCLFTAFPGILS) form the signal peptide. The segment at 19–48 (DVQLQESGPDLVKPSQSLSLTCTVTGYSIT) is framework-1. A disulfide bridge connects residues C40 and C114. The interval 49-53 (SGYSW) is complementarity-determining-1. A framework-2 region spans residues 54 to 67 (HWIRQFPGNKLEWM). The segment at 68–84 (GYIHYSGNTSYNPSLKS) is complementarity-determining-2. Residues 85 to 116 (RISITRDTSKNQFFLQLNSVTTEDTATYYCAR) are framework-3.

In Mus musculus (Mouse), this protein is Ig heavy chain V region 1B43.